Consider the following 129-residue polypeptide: DNA-directed RNA polymerase II subunit RPB9 (129 aa).

Zn(2+)-binding residues include cysteine 21, cysteine 24, cysteine 43, cysteine 46, cysteine 90, cysteine 93, cysteine 118, and cysteine 123. The segment at 21–46 (CQECNNMLYPKEDKENKILLYACRNC) adopts a C4-type zinc-finger fold. A TFIIS-type zinc finger spans residues 86-128 (EDHACPKCSHREAVFFQAQTRRAEEEMRLYYVCTNQNCTHRWT).

This sequence belongs to the archaeal RpoM/eukaryotic RPA12/RPB9/RPC11 RNA polymerase family. In terms of assembly, component of the RNA polymerase II (Pol II) complex consisting of 12 subunits.

It localises to the nucleus. The protein localises to the nucleolus. Functionally, DNA-dependent RNA polymerase catalyzes the transcription of DNA into RNA using the four ribonucleoside triphosphates as substrates. Component of RNA polymerase II which synthesizes mRNA precursors and many functional non-coding RNAs. Pol II is the central component of the basal RNA polymerase II transcription machinery. It is composed of mobile elements that move relative to each other. RPB9 is part of the upper jaw surrounding the central large cleft and thought to grab the incoming DNA template. In Drosophila melanogaster (Fruit fly), this protein is DNA-directed RNA polymerase II subunit RPB9.